A 567-amino-acid polypeptide reads, in one-letter code: Proline--tRNA ligase (567 aa).

This sequence belongs to the class-II aminoacyl-tRNA synthetase family. ProS type 1 subfamily. As to quaternary structure, homodimer.

The protein localises to the cytoplasm. The enzyme catalyses tRNA(Pro) + L-proline + ATP = L-prolyl-tRNA(Pro) + AMP + diphosphate. Its function is as follows. Catalyzes the attachment of proline to tRNA(Pro) in a two-step reaction: proline is first activated by ATP to form Pro-AMP and then transferred to the acceptor end of tRNA(Pro). As ProRS can inadvertently accommodate and process non-cognate amino acids such as alanine and cysteine, to avoid such errors it has two additional distinct editing activities against alanine. One activity is designated as 'pretransfer' editing and involves the tRNA(Pro)-independent hydrolysis of activated Ala-AMP. The other activity is designated 'posttransfer' editing and involves deacylation of mischarged Ala-tRNA(Pro). The misacylated Cys-tRNA(Pro) is not edited by ProRS. The chain is Proline--tRNA ligase from Staphylococcus aureus (strain COL).